The chain runs to 165 residues: Endoribonuclease YbeY (165 aa).

3 residues coordinate Zn(2+): His130, His134, and His140.

The protein belongs to the endoribonuclease YbeY family. Requires Zn(2+) as cofactor.

The protein localises to the cytoplasm. Functionally, single strand-specific metallo-endoribonuclease involved in late-stage 70S ribosome quality control and in maturation of the 3' terminus of the 16S rRNA. The polypeptide is Endoribonuclease YbeY (Streptococcus thermophilus (strain CNRZ 1066)).